The sequence spans 358 residues: PDZ and LIM domain protein 3 (358 aa).

In terms of domain architecture, PDZ spans 1-84 (MPQNVLLPGP…QLCLKIDRAE (84 aa)). Disordered stretches follow at residues 126–155 (FILP…SVST) and 237–274 (DTEH…RAPV). Residues 129–146 (PGRSSGSSTPSGFDPGSG) show a composition bias toward low complexity. The 60-residue stretch at 288–347 (PICDRCGNGIVGTVVKAKDKLRHPDCFVCSDCNLNLKQKGYFFVEGQLYCEAHARARMRP) folds into the LIM zinc-binding domain.

The protein resides in the cytoplasm. It is found in the myofibril. Its subcellular location is the sarcomere. The protein localises to the z line. May play a role in the organization of actin filament arrays within muscle cells. This Xenopus laevis (African clawed frog) protein is PDZ and LIM domain protein 3 (pdlim3).